Reading from the N-terminus, the 250-residue chain is DNA repair protein RecO (250 aa).

Belongs to the RecO family.

In terms of biological role, involved in DNA repair and RecF pathway recombination. The polypeptide is DNA repair protein RecO (Lactobacillus helveticus (strain DPC 4571)).